We begin with the raw amino-acid sequence, 995 residues long: ATP-dependent RNA helicase DBP10 (995 aa).

The segment at 1-120 is disordered; sequence MAGVQKRKRD…TQTGDDEDDV (120 aa). Acidic residues-rich tracts occupy residues 12 to 25 and 37 to 50; these read EDQD…DDIA and SESD…EVEA. A compositionally biased stretch (basic and acidic residues) spans 71 to 81; sequence VNNKKKAENKD. Ser101 is subject to Phosphoserine. Positions 137 to 165 match the Q motif motif; that stretch reads GSFPSFGLSKIVLNNIKRKGFRQPTPIQR. One can recognise a Helicase ATP-binding domain in the interval 168–340; sequence IPLILQSRDI…KAGLVNPVLV (173 aa). 181–188 contributes to the ATP binding site; sequence ARTGSGKT. The DEAD box signature appears at 288–291; sequence DEAD. 2 disordered regions span residues 389–427 and 889–973; these read LQNS…PAAN and GSRE…EQIR. A phosphoserine mark is found at Ser398 and Ser400. Composition is skewed to basic residues over residues 407-422 and 914-924; these read QKKR…RKQK and VRGKFKHKQMK. In terms of domain architecture, Helicase C-terminal spans 418–568; sequence FRKQKMPAAN…PMYDSLVDVM (151 aa). Basic and acidic residues predominate over residues 964–973; it reads SELKSTEQIR.

This sequence belongs to the DEAD box helicase family. DDX54/DBP10 subfamily. In terms of assembly, interacts with RRP1 and associates with pre-ribosomal particles.

It localises to the nucleus. It is found in the nucleolus. It carries out the reaction ATP + H2O = ADP + phosphate + H(+). In terms of biological role, ATP-binding RNA helicase involved in the biogenesis of 60S ribosomal subunits and is required for the normal formation of 25S and 5.8S rRNAs. The polypeptide is ATP-dependent RNA helicase DBP10 (DBP10) (Saccharomyces cerevisiae (strain ATCC 204508 / S288c) (Baker's yeast)).